Reading from the N-terminus, the 335-residue chain is Acetyl-coenzyme A carboxylase carboxyl transferase subunit alpha (335 aa).

One can recognise a CoA carboxyltransferase C-terminal domain in the interval Gln40–Glu294.

The protein belongs to the AccA family. Acetyl-CoA carboxylase is a heterohexamer composed of biotin carboxyl carrier protein (AccB), biotin carboxylase (AccC) and two subunits each of ACCase subunit alpha (AccA) and ACCase subunit beta (AccD).

Its subcellular location is the cytoplasm. The catalysed reaction is N(6)-carboxybiotinyl-L-lysyl-[protein] + acetyl-CoA = N(6)-biotinyl-L-lysyl-[protein] + malonyl-CoA. The protein operates within lipid metabolism; malonyl-CoA biosynthesis; malonyl-CoA from acetyl-CoA: step 1/1. Its function is as follows. Component of the acetyl coenzyme A carboxylase (ACC) complex. First, biotin carboxylase catalyzes the carboxylation of biotin on its carrier protein (BCCP) and then the CO(2) group is transferred by the carboxyltransferase to acetyl-CoA to form malonyl-CoA. This is Acetyl-coenzyme A carboxylase carboxyl transferase subunit alpha from Prochlorococcus marinus subsp. pastoris (strain CCMP1986 / NIES-2087 / MED4).